Here is a 356-residue protein sequence, read N- to C-terminus: OVARIAN TUMOR DOMAIN-containing deubiquitinating enzyme 10 (356 aa).

The disordered stretch occupies residues 86 to 117 (DYSHQNQQQQHQQEGYTNNYSNNNNGYAWNDQ). Over residues 89-115 (HQNQQQQHQQEGYTNNYSNNNNGYAWN) the composition is skewed to low complexity. In terms of domain architecture, OTU spans 213 to 337 (FTEVKVPGDG…EVHYNAIYLN (125 aa)). Asp-221 is a catalytic residue. Residue Cys-224 is the Nucleophile of the active site. The active site involves His-330.

It belongs to the peptidase C85 family.

The catalysed reaction is Thiol-dependent hydrolysis of ester, thioester, amide, peptide and isopeptide bonds formed by the C-terminal Gly of ubiquitin (a 76-residue protein attached to proteins as an intracellular targeting signal).. In terms of biological role, hydrolase that can remove conjugated ubiquitin from proteins in vitro and may therefore play an important regulatory role at the level of protein turnover by preventing degradation. Cysteine protease with a preference for 'Lys-63' over 'Lys-48' over 'Met-1' -linked ubiquitin (UB) tetramers as substrates. Also cleaves RUB-GST fusion. This chain is OVARIAN TUMOR DOMAIN-containing deubiquitinating enzyme 10, found in Arabidopsis thaliana (Mouse-ear cress).